A 425-amino-acid chain; its full sequence is MLDQKLIRENPTFVENNLSLRGKFYDIHSIHKITVERKEIDIKISSLQSESKKLSKIIGQEIRNPNNANSQELNKLKEQGNKYRIKVSEFEEKKRILDQQIRDEILKLPNFPSKDAPFGENESNNIQIKEWGDPLKKDNLKTHWEIGENLKLFDSIKSTKIAKSRFITLSGNGARLERALINFMLDVHSNNGYLELMPPALVNSESLQGSGQLPKFSNESFKCANDDLWLSPTAEVPLTAFHKNEIIDPKLLPLKYVAYSPCFRREAGSYGRDTKGLIRLHQFNKVELYWFSDPNKSLEAHKEITADAESILKKLNLPYRLVDICTGDLGFSSSRTFDLEVWLPSNKCYREISSCSNCRDFQARRSSIRTKIDKKTSYIHTLNGSGLAIGRTMAAILENGQRPDGSVKIPDVLVPYFGSSLIKTN.

An L-serine-binding site is contributed by 233 to 235 (TAE). 264–266 (RRE) is a binding site for ATP. Position 287 (glutamate 287) interacts with L-serine. 351–354 (EISS) lines the ATP pocket. Serine 385 serves as a coordination point for L-serine.

The protein belongs to the class-II aminoacyl-tRNA synthetase family. Type-1 seryl-tRNA synthetase subfamily. Homodimer. The tRNA molecule binds across the dimer.

The protein localises to the cytoplasm. The enzyme catalyses tRNA(Ser) + L-serine + ATP = L-seryl-tRNA(Ser) + AMP + diphosphate + H(+). It carries out the reaction tRNA(Sec) + L-serine + ATP = L-seryl-tRNA(Sec) + AMP + diphosphate + H(+). It functions in the pathway aminoacyl-tRNA biosynthesis; selenocysteinyl-tRNA(Sec) biosynthesis; L-seryl-tRNA(Sec) from L-serine and tRNA(Sec): step 1/1. Its function is as follows. Catalyzes the attachment of serine to tRNA(Ser). Is also able to aminoacylate tRNA(Sec) with serine, to form the misacylated tRNA L-seryl-tRNA(Sec), which will be further converted into selenocysteinyl-tRNA(Sec). This Prochlorococcus marinus (strain MIT 9515) protein is Serine--tRNA ligase.